Here is a 252-residue protein sequence, read N- to C-terminus: MATSIARLSRRGVTSNLIRRCFAAEAALARKTELPKPQFTVSPSTDRVKWDYRGQRQIIPLGQWLPKVAVDAYVAPNVVLAGQVTVWDGSSVWNGAVLRGDLNKITVGFCSNVQERCVVHAAWSSPTGLPAATIIDRYVTVGAYSLLRSCTIEPECIIGQHSILMEGSLVETRSILEAGSVVPPGRRIPSGELWGGNPARFIRTLTNEETLEIPKLAVAINHLSGDYFSEFLPYSTVYLEVEKFKKSLGIAV.

The N-terminal 29 residues, 1–29 (MATSIARLSRRGVTSNLIRRCFAAEAALA), are a transit peptide targeting the mitochondrion. Residues 99-101 (RGD) and 114-115 (QE) contribute to the substrate site. Residue His-120 coordinates Zn(2+). The substrate site is built by Arg-148, Gln-160, and Tyr-227.

The protein belongs to the gamma-class carbonic anhydrase family. As to quaternary structure, component of the mitochondrial oxidoreductase respiratory chain complex I; element of the extra matrix-exposed domain, which is attached to the membrane arm of this complex. Interacts with GAMMACA2.

It localises to the mitochondrion membrane. Involved in complex I assembly in mitochondria and respiration. This Arabidopsis thaliana (Mouse-ear cress) protein is Gamma carbonic anhydrase-like 1, mitochondrial (GAMMACAL1).